A 473-amino-acid chain; its full sequence is Iron transporter SMF3 (473 aa).

A run of 2 helical transmembrane segments spans residues 14–34 and 44–64; these read FIGPGILVSVAYMDPGNYATS and TLLFSIFISNIFAVLLQCLCV. The N-linked (GlcNAc...) asparagine glycan is linked to Asn87. The next 9 helical transmembrane spans lie at 97–117, 119–139, 152–172, 198–218, 257–277, 297–317, 352–372, 373–393, and 448–468; these read AIIATDLAEVVGTAIALQILF, IPLTWGVLLTVLDVLVILMFY, FEFGVGILVIGTCICFVLELF, ALYISLGILGATVMPHSLYLG, LIISLFLIATFVNSAILIVAG, LLVHYISPAAGLIFALAMLCS, LIAIVPCLFVTLTMGEKGISD, ILNFSQVVLSLILPIVSAPLI, and VFVWALIGSLNCYLVISYLLG.

Belongs to the NRAMP family.

It localises to the vacuole membrane. The protein localises to the endoplasmic reticulum membrane. Functionally, has a role in controlling the cellular iron ion levels. Mobilizes vacuolar stores of iron in conditions of low iron levels. The sequence is that of Iron transporter SMF3 (SMF3) from Saccharomyces cerevisiae (strain ATCC 204508 / S288c) (Baker's yeast).